Here is a 402-residue protein sequence, read N- to C-terminus: DNA replication and repair protein RecF (402 aa).

Position 30-37 (G30–T37) interacts with ATP.

This sequence belongs to the RecF family.

The protein resides in the cytoplasm. Functionally, the RecF protein is involved in DNA metabolism; it is required for DNA replication and normal SOS inducibility. RecF binds preferentially to single-stranded, linear DNA. It also seems to bind ATP. In Pseudarthrobacter chlorophenolicus (strain ATCC 700700 / DSM 12829 / CIP 107037 / JCM 12360 / KCTC 9906 / NCIMB 13794 / A6) (Arthrobacter chlorophenolicus), this protein is DNA replication and repair protein RecF.